The sequence spans 366 residues: Alanine racemase (366 aa).

Lys-40 (proton acceptor; specific for D-alanine) is an active-site residue. Lys-40 carries the post-translational modification N6-(pyridoxal phosphate)lysine. Arg-136 lines the substrate pocket. Tyr-263 acts as the Proton acceptor; specific for L-alanine in catalysis. Met-310 is a substrate binding site.

The protein belongs to the alanine racemase family. The cofactor is pyridoxal 5'-phosphate.

It carries out the reaction L-alanine = D-alanine. The protein operates within amino-acid biosynthesis; D-alanine biosynthesis; D-alanine from L-alanine: step 1/1. In terms of biological role, catalyzes the interconversion of L-alanine and D-alanine. May also act on other amino acids. The polypeptide is Alanine racemase (alr) (Streptococcus pyogenes serotype M6 (strain ATCC BAA-946 / MGAS10394)).